The sequence spans 345 residues: 2-oxoglutarate and iron-dependent oxygenase domain-containing protein 2 (345 aa).

The 95-residue stretch at 207 to 301 (DSHKAFVVKY…RWNLIIWMRA (95 aa)) folds into the Fe2OG dioxygenase domain. His-227, Asp-229, and His-282 together coordinate Fe cation. A 2-oxoglutarate-binding site is contributed by Arg-292.

The protein belongs to the OGFOD2 family. It depends on Fe(2+) as a cofactor. L-ascorbate serves as cofactor.

The chain is 2-oxoglutarate and iron-dependent oxygenase domain-containing protein 2 (ogfod2) from Danio rerio (Zebrafish).